Reading from the N-terminus, the 449-residue chain is UDP-N-acetylmuramoylalanine--D-glutamate ligase (449 aa).

ATP is bound at residue 113–119; sequence GTNGKTT.

Belongs to the MurCDEF family.

The protein resides in the cytoplasm. It carries out the reaction UDP-N-acetyl-alpha-D-muramoyl-L-alanine + D-glutamate + ATP = UDP-N-acetyl-alpha-D-muramoyl-L-alanyl-D-glutamate + ADP + phosphate + H(+). It participates in cell wall biogenesis; peptidoglycan biosynthesis. In terms of biological role, cell wall formation. Catalyzes the addition of glutamate to the nucleotide precursor UDP-N-acetylmuramoyl-L-alanine (UMA). The sequence is that of UDP-N-acetylmuramoylalanine--D-glutamate ligase from Microcystis aeruginosa (strain NIES-843 / IAM M-2473).